Here is a 425-residue protein sequence, read N- to C-terminus: Serine--tRNA ligase (425 aa).

233 to 235 (TAE) contacts L-serine. Residue 264 to 266 (RRE) coordinates ATP. E287 serves as a coordination point for L-serine. 351–354 (EISS) lines the ATP pocket. S385 serves as a coordination point for L-serine.

This sequence belongs to the class-II aminoacyl-tRNA synthetase family. Type-1 seryl-tRNA synthetase subfamily. In terms of assembly, homodimer. The tRNA molecule binds across the dimer.

It is found in the cytoplasm. It carries out the reaction tRNA(Ser) + L-serine + ATP = L-seryl-tRNA(Ser) + AMP + diphosphate + H(+). It catalyses the reaction tRNA(Sec) + L-serine + ATP = L-seryl-tRNA(Sec) + AMP + diphosphate + H(+). It functions in the pathway aminoacyl-tRNA biosynthesis; selenocysteinyl-tRNA(Sec) biosynthesis; L-seryl-tRNA(Sec) from L-serine and tRNA(Sec): step 1/1. Functionally, catalyzes the attachment of serine to tRNA(Ser). Is also able to aminoacylate tRNA(Sec) with serine, to form the misacylated tRNA L-seryl-tRNA(Sec), which will be further converted into selenocysteinyl-tRNA(Sec). This is Serine--tRNA ligase from Prochlorococcus marinus (strain MIT 9515).